The sequence spans 245 residues: Collagen triple helix repeat-containing protein 1 (245 aa).

A signal peptide spans 1-32 (MHPQGRAASPQLLLGLFLVLLLLLQLSAPSSA). The region spanning 59–92 (QGPAGVPGRDGSPGANGIPGTPGIPGRDGFKGEK) is the Collagen-like domain. The tract at residues 64-87 (VPGRDGSPGANGIPGTPGIPGRDG) is disordered. Asparagine 188 carries N-linked (GlcNAc...) asparagine glycosylation.

In terms of processing, N-glycosylated. Expressed after injury in the carotid arteries (at protein level). Expressed in brain, lung, and after injury in fibroblasts of the adventitia and the neointima of the arteries.

It is found in the secreted. The protein resides in the extracellular space. Its subcellular location is the extracellular matrix. Its function is as follows. Its overexpression in smooth muscle cell lines increases their migratory ability and inhibits collagen type I expression. May act as a negative regulator of collagen matrix deposition. This Rattus norvegicus (Rat) protein is Collagen triple helix repeat-containing protein 1 (Cthrc1).